Here is a 259-residue protein sequence, read N- to C-terminus: MLHIIENLLDTAQLSQLTSILTHQHAQWQDGKLTAGISAQQQKNNWQLSRQDPSYQAMANLCLEALQQHPVFMSAALPKVIMPPLFSAYQLGQGYGMHVDNALQTHPDSKQLMRTDLSLTLFLNNPADYEGGELVISDEYGEHSIKLSAGDAVLYPSTSLHRVNTVTSGQRLAMVTWVQSLVRSDEQRQILHDLDVSHILLRQKLLATSDQAQSTQAQSTQAQCGQLSEQHSTDQQLTHQAIEKLNQSYHNLLRLWAES.

The region spanning 80-180 is the Fe2OG dioxygenase domain; sequence VIMPPLFSAY…RLAMVTWVQS (101 aa). 3 residues coordinate Fe cation: His98, Asp100, and His161. Arg171 provides a ligand contact to 2-oxoglutarate.

The cofactor is Fe(2+). L-ascorbate serves as cofactor.

The polypeptide is PKHD-type hydroxylase PsycPRwf_1523 (Psychrobacter sp. (strain PRwf-1)).